The following is a 325-amino-acid chain: Hydroxymethylglutaryl-CoA lyase, mitochondrial (325 aa).

The N-terminal 27 residues, 1-27 (MAAMRKALPRRLVGLASLRAVSTSSMG), are a transit peptide targeting the mitochondrion. The 268-residue stretch at 33–300 (VKIVEVGPRD…HTGVNLQKLL (268 aa)) folds into the Pyruvate carboxyltransferase domain. Arg41 contacts substrate. Asp42 contributes to the a divalent metal cation binding site. Position 48 is an N6-acetyllysine; alternate (Lys48). The residue at position 48 (Lys48) is an N6-succinyllysine; alternate. N6-acetyllysine is present on Lys111. N6-acetyllysine; alternate occurs at positions 137 and 179. An N6-succinyllysine; alternate mark is found at Lys137 and Lys179. A divalent metal cation contacts are provided by His233 and His235. The active site involves Cys266. Asn275 lines the a divalent metal cation pocket. Residues 323-325 (CKL) carry the Microbody targeting signal motif. The residue at position 324 (Lys324) is an N6-acetyllysine.

This sequence belongs to the HMG-CoA lyase family. In terms of assembly, homodimer; disulfide-linked. Can also form homotetramers. A divalent metal cation serves as cofactor. Highest expression in liver. Expressed in pancreas, kidney, intestine, testis, fibroblasts and lymphoblasts. Very low expression in brain and skeletal muscle. The relative expression of isoform 2 (at mRNA level) is highest in heart (30%), skeletal muscle (22%), and brain (14%).

It localises to the mitochondrion matrix. The protein resides in the peroxisome. The catalysed reaction is (3S)-3-hydroxy-3-methylglutaryl-CoA = acetoacetate + acetyl-CoA. Its pathway is metabolic intermediate metabolism; (S)-3-hydroxy-3-methylglutaryl-CoA degradation; acetoacetate from (S)-3-hydroxy-3-methylglutaryl-CoA: step 1/1. Stimulated by reducing agents such as dithiothreitol (DTT). Mitochondrial 3-hydroxy-3-methylglutaryl-CoA lyase that catalyzes a cation-dependent cleavage of (S)-3-hydroxy-3-methylglutaryl-CoA into acetyl-CoA and acetoacetate, a key step in ketogenesis. Terminal step in leucine catabolism. Ketone bodies (beta-hydroxybutyrate, acetoacetate and acetone) are essential as an alternative source of energy to glucose, as lipid precursors and as regulators of metabolism. In Homo sapiens (Human), this protein is Hydroxymethylglutaryl-CoA lyase, mitochondrial (HMGCL).